The sequence spans 1005 residues: DNA polymerase (1005 aa).

The protein belongs to the DNA polymerase type-B family. Interacts with OPG148. Component of the Uracil-DNA glycosylase(UDG)-OPG148-polymerase complex; OPG148 and OPG116/UDG form a heterodimeric processivity factor that associates with OPG071 to form the processive polymerase holoenzyme.

The catalysed reaction is DNA(n) + a 2'-deoxyribonucleoside 5'-triphosphate = DNA(n+1) + diphosphate. Functionally, catalyzes DNA synthesis. Acquires processivity by associating with a heterodimeric processivity factor comprised of the viral OPG148 and OPG116 proteins, thereby forming the DNA polymerase holoenzyme. Displays 3'- to 5' exonuclease activity. Might participate in viral DNA recombination. Does not perform OPG116/D4synthesis across an abasic site. This is DNA polymerase (OPG071) from Variola virus (isolate Human/India/Ind3/1967) (VARV).